Reading from the N-terminus, the 216-residue chain is Ribosome maturation factor RimP (216 aa).

The protein belongs to the RimP family.

It is found in the cytoplasm. In terms of biological role, required for maturation of 30S ribosomal subunits. The protein is Ribosome maturation factor RimP of Bartonella quintana (strain Toulouse) (Rochalimaea quintana).